Consider the following 558-residue polypeptide: Atlastin-1 (558 aa).

Positions Met1 to Glu27 are disordered. An N-terminal hypervariable region (HVR) region spans residues Met1–Pro34. The Cytoplasmic portion of the chain corresponds to Met1–Ala449. A phosphoserine mark is found at Ser10, Ser22, and Ser23. The region spanning Asp64–Ser309 is the GB1/RHD3-type G domain. Residues Arg77, Lys78, Gly79, Lys80, Ser81, Phe82, Gln148, Arg217, Asp218, Val276, and Asn279 each coordinate GDP. Positions 77, 78, 79, 80, 81, and 82 each coordinate GTP. Residue Ser81 coordinates Mg(2+). GTP contacts are provided by Arg217, Asp218, and Val276. The interval Met347–Ser438 is 3HB (three-helix bundle) domain. At Lys395 the chain carries N6-acetyllysine. The stretch at Glu412 to Lys439 forms a coiled coil. The interval Lys439–Thr447 is linker. A helical membrane pass occupies residues Thr450–Leu470. Position 471 (Asp471) is a topological domain, lumenal. Residues Ile472–Ala492 traverse the membrane as a helical segment. At Tyr493–Met558 the chain is on the cytoplasmic side. Residues Asn521–Met558 form an autoinhibitory domain region.

It belongs to the TRAFAC class dynamin-like GTPase superfamily. GB1/RHD3 GTPase family. GB1 subfamily. Monomeric and homodimeric. The homodimer, transiently formed by two molecules on opposing membranes, is the active form mediating ER membrane fusion. Interacts with REEP1, REEP5, RTN3 and RTN4 (via the transmembrane region); these proteins are involved in endoplasmic reticulum tubular network organization. Interacts with ZFYVE27; both proteins are involved in endoplasmic reticulum tubular network organization. Interacts with ARL6IP1; both proteins are involved in endoplasmic reticulum tubular network organization. Interacts with SPAST; the interaction is direct, could recruit SPAST to Golgi membranes. Interacts (via N-terminal region) with MAP4K4 (via CNH regulatory domain). May interact with TMED2. Interacts with CPT1C. In terms of processing, phosphorylated. Phosphorylation, by different kinases, of the N-terminal hypervariable region (HVR) regulates the ATL1-mediated membrane tethering step.

The protein localises to the endoplasmic reticulum membrane. The protein resides in the golgi apparatus membrane. It localises to the cell projection. Its subcellular location is the axon. The catalysed reaction is GTP + H2O = GDP + phosphate + H(+). In terms of biological role, atlastin-1 (ATL1) is a membrane-anchored GTPase that mediates the GTP-dependent fusion of endoplasmic reticulum (ER) membranes, maintaining the continuous ER network. It facilitates the formation of three-way junctions where ER tubules intersect. Two atlastin-1 on neighboring ER tubules bind GTP and form loose homodimers through the GB1/RHD3-type G domains and 3HB regions. Upon GTP hydrolysis, the 3HB regions tighten, pulling the membranes together to drive their fusion. After fusion, the homodimer disassembles upon release of inorganic phosphate (Pi). Subsequently, GDP dissociates, resetting the monomers to a conformation ready for a new fusion cycle. May also regulate more or less directly Golgi biogenesis. Indirectly regulates axonal development. In Macaca fascicularis (Crab-eating macaque), this protein is Atlastin-1.